Consider the following 118-residue polypeptide: Ribonuclease P protein component (118 aa).

Belongs to the RnpA family. In terms of assembly, consists of a catalytic RNA component (M1 or rnpB) and a protein subunit.

It catalyses the reaction Endonucleolytic cleavage of RNA, removing 5'-extranucleotides from tRNA precursor.. In terms of biological role, RNaseP catalyzes the removal of the 5'-leader sequence from pre-tRNA to produce the mature 5'-terminus. It can also cleave other RNA substrates such as 4.5S RNA. The protein component plays an auxiliary but essential role in vivo by binding to the 5'-leader sequence and broadening the substrate specificity of the ribozyme. The sequence is that of Ribonuclease P protein component from Rickettsia rickettsii (strain Iowa).